Consider the following 283-residue polypeptide: MAHLGAHFAFRSRWQKTDDELCRHSMSFILHKAIRNDFFQSYLYLLEKIPLVKLYALTSQVIDGEMQFYARAKLFYQEVPATEEGMMGNFIELSNPDIQASREFLRKFVGGPGRAGTGCALDCGSGIGRVSKHVLLPVFSSVELVDMMESFLLEAQSYLQVNEDKVESYHCYSLQEFTPHLGRYDVIWIQWVSGYLTDKDLLAFLSRCRDGLKENGVIILKDNVAREGCIFDLSDSSVTRDMDILRSLIRKSGLVVLGQEKQEGFPEQCVPVWMFALHSDRHS.

S-adenosyl-L-methionine contacts are provided by residues Gly-124, Arg-129, Asp-146, 174–175, and Gln-190; that span reads LQ.

It belongs to the methyltransferase superfamily. NTM1 family.

The protein localises to the nucleus. The catalysed reaction is N-terminal L-alanyl-L-prolyl-L-lysyl-[protein] + S-adenosyl-L-methionine = N-terminal N-methyl-L-alanyl-L-prolyl-L-lysyl-[protein] + S-adenosyl-L-homocysteine + H(+). It carries out the reaction N-terminal L-prolyl-L-prolyl-L-lysyl-[protein] + S-adenosyl-L-methionine = N-terminal N-methyl-L-prolyl-L-prolyl-L-lysyl-[protein] + S-adenosyl-L-homocysteine + H(+). The enzyme catalyses N-terminal L-seryl-L-prolyl-L-lysyl-[protein] + S-adenosyl-L-methionine = N-terminal N-methyl-L-seryl-L-prolyl-L-lysyl-[protein] + S-adenosyl-L-homocysteine + H(+). Alpha N-methyltransferase that methylates the N-terminus of target proteins containing the N-terminal motif [Ala/Pro/Ser]-Pro-Lys when the initiator Met is cleaved. Specifically catalyzes monomethylation of exposed alpha-amino group of Ala or Ser residue in the [Ala/Ser]-Pro-Lys motif and Pro in the Pro-Pro-Lys motif. Predominantly functions as a mono-methyltransferase but is also able to di-/tri-methylate the GPKRIA peptide and di-methylate the PPKRIA peptide (in vitro). May activate NTMT1 by priming its substrates for trimethylation. The protein is N-terminal Xaa-Pro-Lys N-methyltransferase 2 (Ntmt2) of Mus musculus (Mouse).